The following is a 140-amino-acid chain: Sex-regulated protein janus-B (140 aa).

A substrate-binding site is contributed by R42. The active-site Proton acceptor is the H69. 110–112 provides a ligand contact to substrate; the sequence is CKT.

It belongs to the janus family.

Its function is as follows. JanA and janB regulate somatic sex differentiation. The protein is Sex-regulated protein janus-B (janB) of Drosophila pseudoobscura pseudoobscura (Fruit fly).